A 179-amino-acid chain; its full sequence is NAD(P)H-quinone oxidoreductase subunit I, chloroplastic (179 aa).

2 4Fe-4S ferredoxin-type domains span residues Gly55–Arg84 and Leu95–Glu124. 8 residues coordinate [4Fe-4S] cluster: Cys64, Cys67, Cys70, Cys74, Cys104, Cys107, Cys110, and Cys114.

Belongs to the complex I 23 kDa subunit family. NDH is composed of at least 16 different subunits, 5 of which are encoded in the nucleus. Requires [4Fe-4S] cluster as cofactor.

It localises to the plastid. Its subcellular location is the chloroplast thylakoid membrane. The enzyme catalyses a plastoquinone + NADH + (n+1) H(+)(in) = a plastoquinol + NAD(+) + n H(+)(out). It catalyses the reaction a plastoquinone + NADPH + (n+1) H(+)(in) = a plastoquinol + NADP(+) + n H(+)(out). Its function is as follows. NDH shuttles electrons from NAD(P)H:plastoquinone, via FMN and iron-sulfur (Fe-S) centers, to quinones in the photosynthetic chain and possibly in a chloroplast respiratory chain. The immediate electron acceptor for the enzyme in this species is believed to be plastoquinone. Couples the redox reaction to proton translocation, and thus conserves the redox energy in a proton gradient. In Nuphar advena (Common spatterdock), this protein is NAD(P)H-quinone oxidoreductase subunit I, chloroplastic.